The sequence spans 131 residues: Small ribosomal subunit protein uS8 (131 aa).

The protein belongs to the universal ribosomal protein uS8 family. Part of the 30S ribosomal subunit. Contacts proteins S5 and S12.

In terms of biological role, one of the primary rRNA binding proteins, it binds directly to 16S rRNA central domain where it helps coordinate assembly of the platform of the 30S subunit. This is Small ribosomal subunit protein uS8 from Campylobacter lari (strain RM2100 / D67 / ATCC BAA-1060).